The following is a 65-amino-acid chain: Large ribosomal subunit protein bL35 (65 aa).

The protein belongs to the bacterial ribosomal protein bL35 family.

The sequence is that of Large ribosomal subunit protein bL35 from Methylobacillus flagellatus (strain ATCC 51484 / DSM 6875 / VKM B-1610 / KT).